Reading from the N-terminus, the 474-residue chain is Mitogen-activated protein kinase pmk-3 (474 aa).

Positions 1-13 (MASVPSSSSLPVS) are enriched in low complexity. A disordered region spans residues 1 to 90 (MASVPSSSSL…EEEEDILSKP (90 aa)). Positions 30-48 (KRSNNQSQPPESYEPNTWL) are enriched in polar residues. The span at 52–69 (REQEQQKKLAAENIKKQS) shows a compositional bias: basic and acidic residues. A Protein kinase domain is found at 114-419 (YDVEPNSIEY…VEEAIQHPYL (306 aa)). Residues 124 to 132 (LGGGSFGNV) and Lys-150 each bind ATP. Asp-252 acts as the Proton acceptor in catalysis. At Thr-285 the chain carries Phosphothreonine. The short motif at 285–287 (TQY) is the TXY element. Tyr-287 carries the phosphotyrosine modification.

This sequence belongs to the protein kinase superfamily. CMGC Ser/Thr protein kinase family. MAP kinase subfamily. Interacts with mak-2. May interact with vhp-1. May interact with uev-3. It depends on Mg(2+) as a cofactor. Dually phosphorylated on Thr-285 and Tyr-287, which activates the enzyme. Expressed throughout the intestine.

It is found in the nucleus. Its subcellular location is the cytoplasm. The protein resides in the cell projection. The protein localises to the axon. It localises to the dendrite. It is found in the cilium. The enzyme catalyses L-seryl-[protein] + ATP = O-phospho-L-seryl-[protein] + ADP + H(+). The catalysed reaction is L-threonyl-[protein] + ATP = O-phospho-L-threonyl-[protein] + ADP + H(+). Activated by phosphorylation on threonine and tyrosine. Functionally, responds to activation by environmental stress and pro-inflammatory cytokines by phosphorylating downstream targets. Involved in axon regeneration after injury, probably downstream of dlk-1 and mkk-4 and upstream of mak-2. May phosphorylate mak-2. Plays a role in cilium length regulation, possibly by reducing rab-5 mediated endocytosis. Plays a role in the formation of muscle connections, also called muscle arm extensions, between the body wall and the motor axons in the dorsal and ventral cord. This is Mitogen-activated protein kinase pmk-3 (pmk-3) from Caenorhabditis elegans.